Consider the following 474-residue polypeptide: Protein anachronism (474 aa).

Residues 1 to 33 (MASAMRGEKCERSRIRELVLILSLITMAGDSRA) form the signal peptide. N-linked (GlcNAc...) asparagine glycosylation is found at Asn-54, Asn-62, Asn-73, Asn-116, and Asn-144. The interval 173–195 (NPGQTREHNPGQASTQPISTENP) is disordered. Residues 183-195 (GQASTQPISTENP) show a composition bias toward polar residues. N-linked (GlcNAc...) asparagine glycosylation occurs at Asn-342. The segment covering 359 to 372 (FIESTTSNSPTIDN) has biased composition (polar residues). The segment at 359–474 (FIESTTSNSP…HHRIPAHKQE (116 aa)) is disordered. Basic residues-rich tracts occupy residues 390-400 (LVHHRRHHHNH) and 437-474 (NHHR…HKQE).

As to expression, synthesized in some glial cells and secreted.

Its subcellular location is the secreted. Functionally, negatively regulates proliferation of neuronal precursor cells, thereby controlling the timing of postembryonic neurogenesis. This Drosophila melanogaster (Fruit fly) protein is Protein anachronism (ana).